A 181-amino-acid polypeptide reads, in one-letter code: Crossover junction endodeoxyribonuclease RuvC (181 aa).

Active-site residues include Asp-8, Glu-67, and Asp-139. Mg(2+) is bound by residues Asp-8, Glu-67, and Asp-139.

The protein belongs to the RuvC family. As to quaternary structure, homodimer which binds Holliday junction (HJ) DNA. The HJ becomes 2-fold symmetrical on binding to RuvC with unstacked arms; it has a different conformation from HJ DNA in complex with RuvA. In the full resolvosome a probable DNA-RuvA(4)-RuvB(12)-RuvC(2) complex forms which resolves the HJ. Requires Mg(2+) as cofactor.

The protein resides in the cytoplasm. The enzyme catalyses Endonucleolytic cleavage at a junction such as a reciprocal single-stranded crossover between two homologous DNA duplexes (Holliday junction).. In terms of biological role, the RuvA-RuvB-RuvC complex processes Holliday junction (HJ) DNA during genetic recombination and DNA repair. Endonuclease that resolves HJ intermediates. Cleaves cruciform DNA by making single-stranded nicks across the HJ at symmetrical positions within the homologous arms, yielding a 5'-phosphate and a 3'-hydroxyl group; requires a central core of homology in the junction. The consensus cleavage sequence is 5'-(A/T)TT(C/G)-3'. Cleavage occurs on the 3'-side of the TT dinucleotide at the point of strand exchange. HJ branch migration catalyzed by RuvA-RuvB allows RuvC to scan DNA until it finds its consensus sequence, where it cleaves and resolves the cruciform DNA. This Acinetobacter baylyi (strain ATCC 33305 / BD413 / ADP1) protein is Crossover junction endodeoxyribonuclease RuvC.